A 157-amino-acid chain; its full sequence is uncharacterized protein (157 aa).

Positions 9–146 (LLINYKTLDE…GDFYVWHPET (138 aa)) constitute an N-acetyltransferase domain.

This is an uncharacterized protein from Bacillus cereus (strain AH187).